The primary structure comprises 440 residues: UDP-N-acetylmuramoylalanine--D-glutamate ligase (440 aa).

113–119 contacts ATP; it reads GTNGKST.

The protein belongs to the MurCDEF family.

The protein resides in the cytoplasm. The enzyme catalyses UDP-N-acetyl-alpha-D-muramoyl-L-alanine + D-glutamate + ATP = UDP-N-acetyl-alpha-D-muramoyl-L-alanyl-D-glutamate + ADP + phosphate + H(+). Its pathway is cell wall biogenesis; peptidoglycan biosynthesis. Its function is as follows. Cell wall formation. Catalyzes the addition of glutamate to the nucleotide precursor UDP-N-acetylmuramoyl-L-alanine (UMA). The polypeptide is UDP-N-acetylmuramoylalanine--D-glutamate ligase (murD) (Buchnera aphidicola subsp. Schizaphis graminum (strain Sg)).